The sequence spans 491 residues: Ketol-acid reductoisomerase (NADP(+)) (491 aa).

One can recognise a KARI N-terminal Rossmann domain in the interval 15–208 (AQLGTCRFME…GGHRAGVLES (194 aa)). NADP(+)-binding positions include 45–48 (CGAQ), arginine 68, arginine 76, serine 78, and 108–110 (DKQ). The active site involves histidine 132. Residue glycine 158 coordinates NADP(+). 2 consecutive KARI C-terminal knotted domains span residues 209–353 (SFVA…KEQE) and 354–486 (YFDK…MTAM). Residues aspartate 217, glutamate 221, glutamate 389, and glutamate 393 each contribute to the Mg(2+) site. Residue serine 414 coordinates substrate.

This sequence belongs to the ketol-acid reductoisomerase family. The cofactor is Mg(2+).

The catalysed reaction is (2R)-2,3-dihydroxy-3-methylbutanoate + NADP(+) = (2S)-2-acetolactate + NADPH + H(+). It carries out the reaction (2R,3R)-2,3-dihydroxy-3-methylpentanoate + NADP(+) = (S)-2-ethyl-2-hydroxy-3-oxobutanoate + NADPH + H(+). The protein operates within amino-acid biosynthesis; L-isoleucine biosynthesis; L-isoleucine from 2-oxobutanoate: step 2/4. It functions in the pathway amino-acid biosynthesis; L-valine biosynthesis; L-valine from pyruvate: step 2/4. In terms of biological role, involved in the biosynthesis of branched-chain amino acids (BCAA). Catalyzes an alkyl-migration followed by a ketol-acid reduction of (S)-2-acetolactate (S2AL) to yield (R)-2,3-dihydroxy-isovalerate. In the isomerase reaction, S2AL is rearranged via a Mg-dependent methyl migration to produce 3-hydroxy-3-methyl-2-ketobutyrate (HMKB). In the reductase reaction, this 2-ketoacid undergoes a metal-dependent reduction by NADPH to yield (R)-2,3-dihydroxy-isovalerate. This chain is Ketol-acid reductoisomerase (NADP(+)), found in Christiangramia forsetii (strain DSM 17595 / CGMCC 1.15422 / KT0803) (Gramella forsetii).